Here is a 287-residue protein sequence, read N- to C-terminus: ATP synthase gamma chain (287 aa).

This sequence belongs to the ATPase gamma chain family. As to quaternary structure, F-type ATPases have 2 components, CF(1) - the catalytic core - and CF(0) - the membrane proton channel. CF(1) has five subunits: alpha(3), beta(3), gamma(1), delta(1), epsilon(1). CF(0) has three main subunits: a, b and c.

Its subcellular location is the cell inner membrane. In terms of biological role, produces ATP from ADP in the presence of a proton gradient across the membrane. The gamma chain is believed to be important in regulating ATPase activity and the flow of protons through the CF(0) complex. The sequence is that of ATP synthase gamma chain from Pectobacterium carotovorum subsp. carotovorum (strain PC1).